Consider the following 284-residue polypeptide: tRNA pseudouridine synthase A (284 aa).

The active-site Nucleophile is the Asp-62. Tyr-123 lines the substrate pocket.

This sequence belongs to the tRNA pseudouridine synthase TruA family. Homodimer.

It catalyses the reaction uridine(38/39/40) in tRNA = pseudouridine(38/39/40) in tRNA. Its function is as follows. Formation of pseudouridine at positions 38, 39 and 40 in the anticodon stem and loop of transfer RNAs. In Streptomyces griseus subsp. griseus (strain JCM 4626 / CBS 651.72 / NBRC 13350 / KCC S-0626 / ISP 5235), this protein is tRNA pseudouridine synthase A.